Consider the following 188-residue polypeptide: Ribosomal RNA small subunit methyltransferase G (188 aa).

Residues Gly69, Phe74, 119–120, and Arg134 contribute to the S-adenosyl-L-methionine site; that span reads VQ.

It belongs to the methyltransferase superfamily. RNA methyltransferase RsmG family.

It is found in the cytoplasm. The catalysed reaction is guanosine(527) in 16S rRNA + S-adenosyl-L-methionine = N(7)-methylguanosine(527) in 16S rRNA + S-adenosyl-L-homocysteine. Functionally, specifically methylates the N7 position of guanine in position 527 of 16S rRNA. This is Ribosomal RNA small subunit methyltransferase G from Campylobacter jejuni subsp. doylei (strain ATCC BAA-1458 / RM4099 / 269.97).